Reading from the N-terminus, the 124-residue chain is Small ribosomal subunit protein uS12 (124 aa).

A disordered region spans residues 1–28 (MPTIQQLIRSERSKAKKKTKSPALKQCP). A 3-methylthioaspartic acid modification is found at Asp-89. Residues 101 to 124 (TLDAQGVKDRKQGRSKYGTKKPKE) are disordered. The span at 113 to 124 (GRSKYGTKKPKE) shows a compositional bias: basic residues.

The protein belongs to the universal ribosomal protein uS12 family. As to quaternary structure, part of the 30S ribosomal subunit. Contacts proteins S8 and S17. May interact with IF1 in the 30S initiation complex.

Functionally, with S4 and S5 plays an important role in translational accuracy. Interacts with and stabilizes bases of the 16S rRNA that are involved in tRNA selection in the A site and with the mRNA backbone. Located at the interface of the 30S and 50S subunits, it traverses the body of the 30S subunit contacting proteins on the other side and probably holding the rRNA structure together. The combined cluster of proteins S8, S12 and S17 appears to hold together the shoulder and platform of the 30S subunit. The chain is Small ribosomal subunit protein uS12 from Crocosphaera subtropica (strain ATCC 51142 / BH68) (Cyanothece sp. (strain ATCC 51142)).